The primary structure comprises 218 residues: Large ribosomal subunit protein uL4 (218 aa).

The segment at 55 to 83 (THATKTRGMVSGGGKKPWKQKGTGRARQG) is disordered.

This sequence belongs to the universal ribosomal protein uL4 family. Part of the 50S ribosomal subunit.

One of the primary rRNA binding proteins, this protein initially binds near the 5'-end of the 23S rRNA. It is important during the early stages of 50S assembly. It makes multiple contacts with different domains of the 23S rRNA in the assembled 50S subunit and ribosome. In terms of biological role, forms part of the polypeptide exit tunnel. The protein is Large ribosomal subunit protein uL4 of Bifidobacterium longum (strain DJO10A).